A 65-amino-acid polypeptide reads, in one-letter code: Large ribosomal subunit protein bL35 (65 aa).

Positions 1-23 (MPKIKTNRGAAKRFKKTGTGKVK) are disordered. The span at 10 to 23 (AAKRFKKTGTGKVK) shows a compositional bias: basic residues.

It belongs to the bacterial ribosomal protein bL35 family.

This chain is Large ribosomal subunit protein bL35, found in Trichlorobacter lovleyi (strain ATCC BAA-1151 / DSM 17278 / SZ) (Geobacter lovleyi).